Consider the following 147-residue polypeptide: Lysozyme C-3 (147 aa).

Positions 1-18 (MKALVILGLLFLSVAVQG) are cleaved as a signal peptide. A C-type lysozyme domain is found at 19–147 (KVFERCELAR…VSSYVEGCKL (129 aa)). Cystine bridges form between C24–C145, C48–C133, C83–C99, and C95–C113. Residues E53 and D71 contribute to the active site.

This sequence belongs to the glycosyl hydrolase 22 family. Monomer. As to expression, expressed in stomach.

Its subcellular location is the secreted. The catalysed reaction is Hydrolysis of (1-&gt;4)-beta-linkages between N-acetylmuramic acid and N-acetyl-D-glucosamine residues in a peptidoglycan and between N-acetyl-D-glucosamine residues in chitodextrins.. Its function is as follows. Lysozymes have primarily a bacteriolytic function; those in tissues and body fluids are associated with the monocyte-macrophage system and enhance the activity of immunoagents. The sequence is that of Lysozyme C-3 from Ovis aries (Sheep).